The chain runs to 337 residues: Protein-glutamate methylesterase/protein-glutamine glutaminase of group 3 operon (337 aa).

One can recognise a Response regulatory domain in the interval 2 to 119 (KIAIVNDMPL…GDAREAAAPL (118 aa)). 4-aspartylphosphate is present on Asp53. The region spanning 144–337 (PLREASQRRG…AGRLTEFFAK (194 aa)) is the CheB-type methylesterase domain. Catalysis depends on residues Ser160, His187, and Asp280.

Belongs to the CheB family. In terms of processing, phosphorylated by CheA. Phosphorylation of the N-terminal regulatory domain activates the methylesterase activity.

The protein localises to the cytoplasm. The enzyme catalyses [protein]-L-glutamate 5-O-methyl ester + H2O = L-glutamyl-[protein] + methanol + H(+). It carries out the reaction L-glutaminyl-[protein] + H2O = L-glutamyl-[protein] + NH4(+). Its function is as follows. Involved in chemotaxis. Part of a chemotaxis signal transduction system that modulates chemotaxis in response to various stimuli. Catalyzes the demethylation of specific methylglutamate residues introduced into the chemoreceptors (methyl-accepting chemotaxis proteins or MCP) by CheR. Also mediates the irreversible deamidation of specific glutamine residues to glutamic acid. The protein is Protein-glutamate methylesterase/protein-glutamine glutaminase of group 3 operon of Pseudomonas putida (strain ATCC 47054 / DSM 6125 / CFBP 8728 / NCIMB 11950 / KT2440).